Consider the following 769-residue polypeptide: Glutathione biosynthesis bifunctional protein GshAB (769 aa).

The glutamate--cysteine ligase stretch occupies residues 1 to 347 (MLDSFKEDPK…QLADENENNI (347 aa)). The 255-residue stretch at 514 to 768 (KLVLAEHDIR…IGDKILDFLF (255 aa)) folds into the ATP-grasp domain. 541–599 (SLFEDKQIVVKPKSTNYGWGISIFKNKFTLEDYQEALNIAFSYDSSVIIEEFIPGDEFR) is a binding site for ATP. Mg(2+) is bound by residues aspartate 721, glutamate 738, and asparagine 740. 3 residues coordinate Mn(2+): aspartate 721, glutamate 738, and asparagine 740.

In the N-terminal section; belongs to the glutamate--cysteine ligase type 1 family. Type 2 subfamily. As to quaternary structure, monomer. Mg(2+) serves as cofactor. Mn(2+) is required as a cofactor.

The enzyme catalyses L-cysteine + L-glutamate + ATP = gamma-L-glutamyl-L-cysteine + ADP + phosphate + H(+). It catalyses the reaction gamma-L-glutamyl-L-cysteine + glycine + ATP = glutathione + ADP + phosphate + H(+). Its pathway is sulfur metabolism; glutathione biosynthesis; glutathione from L-cysteine and L-glutamate: step 1/2. It functions in the pathway sulfur metabolism; glutathione biosynthesis; glutathione from L-cysteine and L-glutamate: step 2/2. Functionally, synthesizes glutathione from L-glutamate and L-cysteine via gamma-L-glutamyl-L-cysteine. In Listeria monocytogenes serotype 4b (strain F2365), this protein is Glutathione biosynthesis bifunctional protein GshAB.